The sequence spans 294 residues: N-acetylmuramic acid 6-phosphate etherase (294 aa).

In terms of domain architecture, SIS spans Thr54–Lys217. Glu82 functions as the Proton donor in the catalytic mechanism. Glu113 is a catalytic residue.

This sequence belongs to the GCKR-like family. MurNAc-6-P etherase subfamily. As to quaternary structure, homodimer.

The catalysed reaction is N-acetyl-D-muramate 6-phosphate + H2O = N-acetyl-D-glucosamine 6-phosphate + (R)-lactate. It participates in amino-sugar metabolism; N-acetylmuramate degradation. Functionally, specifically catalyzes the cleavage of the D-lactyl ether substituent of MurNAc 6-phosphate, producing GlcNAc 6-phosphate and D-lactate. This is N-acetylmuramic acid 6-phosphate etherase from Oceanobacillus iheyensis (strain DSM 14371 / CIP 107618 / JCM 11309 / KCTC 3954 / HTE831).